The chain runs to 661 residues: Acetyl-coenzyme A synthetase (661 aa).

Residues 199 to 202 (RGGK) and T317 each bind CoA. ATP-binding positions include 393-395 (GEP), 417-422 (DTFWQT), D508, and R523. Residue S531 participates in CoA binding. R534 contributes to the ATP binding site. R596 is a CoA binding site.

This sequence belongs to the ATP-dependent AMP-binding enzyme family.

The catalysed reaction is acetate + ATP + CoA = acetyl-CoA + AMP + diphosphate. The sequence is that of Acetyl-coenzyme A synthetase (ACS-1) from Coprinopsis cinerea (Inky cap fungus).